The following is a 672-amino-acid chain: Hydroxyproline O-galactosyltransferase GALT5 (672 aa).

Over 1–28 (MKKPKLSKVEKIDKIDLFSSLWKQRSVR) the chain is Cytoplasmic. Residues 29–49 (VIMAIGFLYLVIVSVEIPLVF) traverse the membrane as a helical; Signal-anchor for type II membrane protein segment. The Lumenal portion of the chain corresponds to 50–672 (KSWSSSSVPL…QNKPECCNMR (623 aa)). In terms of domain architecture, Galectin spans 191–392 (KLMELPCGLT…DIDVHSVFVA (202 aa)). 2 N-linked (GlcNAc...) asparagine glycosylation sites follow: asparagine 306 and asparagine 620.

This sequence belongs to the glycosyltransferase 31 family. The cofactor is Mn(2+). In terms of tissue distribution, expressed in juvenile leaves, stems, cauline leaves and siliques.

It localises to the golgi apparatus membrane. Its pathway is protein modification; protein glycosylation. In terms of biological role, possesses hydroxyproline O-galactosyltransferase activity. Transfers galactose from UDP-galactose to hydroxyproline residues in the arabinogalactan proteins (AGPs). Is specific for AGPs containing non-contiguous peptidyl hydroxyproline residues. Utilizes UDP-galactose solely as sugar donor. The addition of galactose onto the peptidyl hydroxyproline residues in AGP core proteins represents the first committed step in arabinogalactan polysaccharide addition. AGP glycans play essential roles in both vegetative and reproductive plant growth. The polypeptide is Hydroxyproline O-galactosyltransferase GALT5 (Arabidopsis thaliana (Mouse-ear cress)).